The sequence spans 234 residues: Large ribosomal subunit protein uL1c (234 aa).

Belongs to the universal ribosomal protein uL1 family. In terms of assembly, part of the 50S ribosomal subunit.

The protein localises to the plastid. It localises to the chloroplast. Binds directly to 23S rRNA. Might be involved in E site tRNA release (Potential). The polypeptide is Large ribosomal subunit protein uL1c (rpl1) (Rhodomonas salina (Cryptomonas salina)).